The sequence spans 370 residues: Glycerophosphodiester phosphodiesterase GDPD3 (370 aa).

Residues 35–322 enclose the GP-PDE domain; that stretch reads FVLMGHRGFG…DMVKDISEAI (288 aa).

This sequence belongs to the glycerophosphoryl diester phosphodiesterase family. As to expression, expressed in flowers and siliques.

The catalysed reaction is a sn-glycero-3-phosphodiester + H2O = an alcohol + sn-glycerol 3-phosphate + H(+). This is Glycerophosphodiester phosphodiesterase GDPD3 from Arabidopsis thaliana (Mouse-ear cress).